The chain runs to 541 residues: Membrane protein insertase YidC (541 aa).

The next 6 membrane-spanning stretches (helical) occupy residues 6-26 (NILL…WQAD), 325-345 (LVVD…LLMF), 349-369 (FVGN…GLLF), 420-440 (GGCL…WVLL), 457-477 (LSVQ…MFVM), and 500-520 (VIFT…WLVG).

It belongs to the OXA1/ALB3/YidC family. Type 1 subfamily. In terms of assembly, interacts with the Sec translocase complex via SecD. Specifically interacts with transmembrane segments of nascent integral membrane proteins during membrane integration.

The protein resides in the cell inner membrane. Functionally, required for the insertion and/or proper folding and/or complex formation of integral membrane proteins into the membrane. Involved in integration of membrane proteins that insert both dependently and independently of the Sec translocase complex, as well as at least some lipoproteins. Aids folding of multispanning membrane proteins. The sequence is that of Membrane protein insertase YidC from Shewanella baltica (strain OS223).